Reading from the N-terminus, the 382-residue chain is MTTTPVEITPRPETGQLVFKPARRGKPPLHLADFDMAGRKEFLRAAGYPAFRASQLSKHYFERFEADPAAMTDLPAGQREELVAKAMPPLLKTVRQLRADEGMTVKSVHRLFDNAMVESVLMRYDKRVTMCISSQAGCGMNCPFCATGQSGLTRNLSAAEIVDQVVQGVRALRDGAVGDPEEAPQRVSNIVFMGMGEALANYKATMGAVHRIIDPSPEGLGISARGLTMSTVGLVPGIRKFTLEKLPITLALSLHAPDDELRDELIPINTRWKVDEALDAARDYYDATGRRVSIEYALIRDINDQGWRADLLGEKLNKRGGGWVHVNPIPLNPTPGSKWTASRPGVEQNFVERLRAHGIPTTVRDTRGSDIDGACGQLATEA.

The active-site Proton acceptor is Glu118. The 247-residue stretch at 124–370 (YDKRVTMCIS…TTVRDTRGSD (247 aa)) folds into the Radical SAM core domain. Residues Cys131 and Cys375 are joined by a disulfide bond. [4Fe-4S] cluster is bound by residues Cys138, Cys142, and Cys145. S-adenosyl-L-methionine contacts are provided by residues 196 to 197 (GE), Ser230, 253 to 255 (SLH), and Asn332. Residue Cys375 is the S-methylcysteine intermediate of the active site.

The protein belongs to the radical SAM superfamily. RlmN family. [4Fe-4S] cluster serves as cofactor.

Its subcellular location is the cytoplasm. It carries out the reaction adenosine(2503) in 23S rRNA + 2 reduced [2Fe-2S]-[ferredoxin] + 2 S-adenosyl-L-methionine = 2-methyladenosine(2503) in 23S rRNA + 5'-deoxyadenosine + L-methionine + 2 oxidized [2Fe-2S]-[ferredoxin] + S-adenosyl-L-homocysteine. It catalyses the reaction adenosine(37) in tRNA + 2 reduced [2Fe-2S]-[ferredoxin] + 2 S-adenosyl-L-methionine = 2-methyladenosine(37) in tRNA + 5'-deoxyadenosine + L-methionine + 2 oxidized [2Fe-2S]-[ferredoxin] + S-adenosyl-L-homocysteine. Functionally, specifically methylates position 2 of adenine 2503 in 23S rRNA and position 2 of adenine 37 in tRNAs. The polypeptide is Probable dual-specificity RNA methyltransferase RlmN (Kocuria rhizophila (strain ATCC 9341 / DSM 348 / NBRC 103217 / DC2201)).